Consider the following 293-residue polypeptide: Acetylglutamate kinase (293 aa).

Residues 65 to 66 (GG), arginine 87, and asparagine 180 each bind substrate.

It belongs to the acetylglutamate kinase family. ArgB subfamily.

The protein resides in the cytoplasm. The catalysed reaction is N-acetyl-L-glutamate + ATP = N-acetyl-L-glutamyl 5-phosphate + ADP. The protein operates within amino-acid biosynthesis; L-arginine biosynthesis; N(2)-acetyl-L-ornithine from L-glutamate: step 2/4. Catalyzes the ATP-dependent phosphorylation of N-acetyl-L-glutamate. This chain is Acetylglutamate kinase, found in Cereibacter sphaeroides (strain ATCC 17029 / ATH 2.4.9) (Rhodobacter sphaeroides).